The chain runs to 111 residues: uncharacterized protein (111 aa).

A helical transmembrane segment spans residues Tyr-81–Ile-101.

The protein localises to the membrane. This is an uncharacterized protein from Schizosaccharomyces pombe (strain 972 / ATCC 24843) (Fission yeast).